The primary structure comprises 230 residues: 3,4-dihydroxy-2-butanone 4-phosphate synthase (230 aa).

Residues arginine 38–glutamate 39, aspartate 43, arginine 151–threonine 155, and glutamate 175 each bind D-ribulose 5-phosphate. A Mg(2+)-binding site is contributed by glutamate 39. Residue histidine 154 coordinates Mg(2+).

This sequence belongs to the DHBP synthase family. As to quaternary structure, homodimer. Requires Mg(2+) as cofactor. It depends on Mn(2+) as a cofactor.

It carries out the reaction D-ribulose 5-phosphate = (2S)-2-hydroxy-3-oxobutyl phosphate + formate + H(+). The protein operates within cofactor biosynthesis; riboflavin biosynthesis; 2-hydroxy-3-oxobutyl phosphate from D-ribulose 5-phosphate: step 1/1. Its function is as follows. Catalyzes the conversion of D-ribulose 5-phosphate to formate and 3,4-dihydroxy-2-butanone 4-phosphate. This chain is 3,4-dihydroxy-2-butanone 4-phosphate synthase, found in Vibrio harveyi (Beneckea harveyi).